A 269-amino-acid chain; its full sequence is Surfeit locus protein 4 (269 aa).

Helical transmembrane passes span 64 to 84 (LLAS…CVLV), 92 to 112 (YACF…SILW), 179 to 199 (FFSI…AIGF), 203 to 223 (LAAL…NAFW), and 239 to 259 (FFQT…GPGG). The short motif at 266-269 (KKEW) is the Di-lysine motif element.

This sequence belongs to the SURF4 family. As to quaternary structure, found in a complex composed at least of SURF4, TMED2 and TMED10. May interact with LMAN1. Interacts with ZFYVE27 and with KIF5A in a ZFYVE27-dependent manner. Interacts with STING1. Interacts with SAR1B. Interacts with TMEM41B.

It localises to the endoplasmic reticulum membrane. Its subcellular location is the endoplasmic reticulum-Golgi intermediate compartment membrane. The protein localises to the golgi apparatus membrane. Its function is as follows. Endoplasmic reticulum cargo receptor that mediates the export of lipoproteins by recruiting cargos into COPII vesicles to facilitate their secretion. Acts as a cargo receptor for lipoproteins bearing both APOB and APOA1, thereby regulating lipoprotein delivery and the maintenance of lipid homeostasis. Synergizes with the GTPase SAR1B to mediate transport of circulating lipoproteins. Promotes the secretion of PCSK9. Also mediates the efficient secretion of erythropoietin (EPO). May also play a role in the maintenance of the architecture of the endoplasmic reticulum-Golgi intermediate compartment and of the Golgi. In Homo sapiens (Human), this protein is Surfeit locus protein 4.